Consider the following 269-residue polypeptide: Intron-associated endonuclease 3 (269 aa).

Its function is as follows. This endonuclease is specific to the nrdB gene splice junction and is involved in intron homing. This chain is Intron-associated endonuclease 3 (ITEVIIIR), found in Enterobacteria phage RB3 (Bacteriophage RB3).